We begin with the raw amino-acid sequence, 129 residues long: Mediator of RNA polymerase II transcription subunit 31-B (129 aa).

This sequence belongs to the Mediator complex subunit 31 family. Component of the Mediator complex.

The protein localises to the nucleus. Functionally, component of the Mediator complex, a coactivator involved in the regulated transcription of nearly all RNA polymerase II-dependent genes. Mediator functions as a bridge to convey information from gene-specific regulatory proteins to the basal RNA polymerase II transcription machinery. Mediator is recruited to promoters by direct interactions with regulatory proteins and serves as a scaffold for the assembly of a functional preinitiation complex with RNA polymerase II and the general transcription factors. This Xenopus laevis (African clawed frog) protein is Mediator of RNA polymerase II transcription subunit 31-B (med31-b).